The primary structure comprises 292 residues: Protoheme IX farnesyltransferase (292 aa).

9 consecutive transmembrane segments (helical) span residues 12–32 (ITWL…PQAS), 43–63 (LLRL…TAAL), 94–114 (LAFG…GVNL), 115–135 (LSAG…TPMK), 144–164 (VGAI…AGGL), 169–189 (WVLF…IAWM), 216–236 (IVIY…LGMS), 239–259 (LYLV…VRVA), and 267–287 (ARGV…LMLL).

The protein belongs to the UbiA prenyltransferase family. Protoheme IX farnesyltransferase subfamily.

It is found in the cell inner membrane. It catalyses the reaction heme b + (2E,6E)-farnesyl diphosphate + H2O = Fe(II)-heme o + diphosphate. It functions in the pathway porphyrin-containing compound metabolism; heme O biosynthesis; heme O from protoheme: step 1/1. Its function is as follows. Converts heme B (protoheme IX) to heme O by substitution of the vinyl group on carbon 2 of heme B porphyrin ring with a hydroxyethyl farnesyl side group. This Solibacter usitatus (strain Ellin6076) protein is Protoheme IX farnesyltransferase.